A 274-amino-acid polypeptide reads, in one-letter code: Large ribosomal subunit protein uL2 (274 aa).

Residues 221–254 form a disordered region; it reads RGTAMNPADHPHGGGEGRTFGKHPVSPWGLPTKG.

This sequence belongs to the universal ribosomal protein uL2 family. As to quaternary structure, part of the 50S ribosomal subunit. Forms a bridge to the 30S subunit in the 70S ribosome.

In terms of biological role, one of the primary rRNA binding proteins. Required for association of the 30S and 50S subunits to form the 70S ribosome, for tRNA binding and peptide bond formation. It has been suggested to have peptidyltransferase activity; this is somewhat controversial. Makes several contacts with the 16S rRNA in the 70S ribosome. This is Large ribosomal subunit protein uL2 from Sulfurihydrogenibium sp. (strain YO3AOP1).